The following is a 453-amino-acid chain: UDP-N-acetylmuramoylalanine--D-glutamate ligase (453 aa).

120–126 (GSNGKST) contributes to the ATP binding site.

The protein belongs to the MurCDEF family.

Its subcellular location is the cytoplasm. It catalyses the reaction UDP-N-acetyl-alpha-D-muramoyl-L-alanine + D-glutamate + ATP = UDP-N-acetyl-alpha-D-muramoyl-L-alanyl-D-glutamate + ADP + phosphate + H(+). The protein operates within cell wall biogenesis; peptidoglycan biosynthesis. Its function is as follows. Cell wall formation. Catalyzes the addition of glutamate to the nucleotide precursor UDP-N-acetylmuramoyl-L-alanine (UMA). The sequence is that of UDP-N-acetylmuramoylalanine--D-glutamate ligase from Teredinibacter turnerae (strain ATCC 39867 / T7901).